Here is a 205-residue protein sequence, read N- to C-terminus: N-(5'-phosphoribosyl)anthranilate isomerase (205 aa).

This sequence belongs to the TrpF family.

It carries out the reaction N-(5-phospho-beta-D-ribosyl)anthranilate = 1-(2-carboxyphenylamino)-1-deoxy-D-ribulose 5-phosphate. It participates in amino-acid biosynthesis; L-tryptophan biosynthesis; L-tryptophan from chorismate: step 3/5. This chain is N-(5'-phosphoribosyl)anthranilate isomerase (TRP1), found in Zygosaccharomyces bailii.